Here is a 53-residue protein sequence, read N- to C-terminus: ATP synthase F(0) complex subunit 8 (53 aa).

The chain crosses the membrane as a helical span at residues 8 to 24; sequence PWLTTFLIVWISLIVIL.

It belongs to the ATPase protein 8 family. In terms of assembly, component of the ATP synthase complex composed at least of ATP5F1A/subunit alpha, ATP5F1B/subunit beta, ATP5MC1/subunit c (homooctomer), MT-ATP6/subunit a, MT-ATP8/subunit 8, ATP5ME/subunit e, ATP5MF/subunit f, ATP5MG/subunit g, ATP5MK/subunit k, ATP5MJ/subunit j, ATP5F1C/subunit gamma, ATP5F1D/subunit delta, ATP5F1E/subunit epsilon, ATP5PF/subunit F6, ATP5PB/subunit b, ATP5PD/subunit d, ATP5PO/subunit OSCP. ATP synthase complex consists of a soluble F(1) head domain (subunits alpha(3) and beta(3)) - the catalytic core - and a membrane F(0) domain - the membrane proton channel (subunits c, a, 8, e, f, g, k and j). These two domains are linked by a central stalk (subunits gamma, delta, and epsilon) rotating inside the F1 region and a stationary peripheral stalk (subunits F6, b, d, and OSCP).

The protein resides in the mitochondrion membrane. Subunit 8, of the mitochondrial membrane ATP synthase complex (F(1)F(0) ATP synthase or Complex V) that produces ATP from ADP in the presence of a proton gradient across the membrane which is generated by electron transport complexes of the respiratory chain. ATP synthase complex consist of a soluble F(1) head domain - the catalytic core - and a membrane F(1) domain - the membrane proton channel. These two domains are linked by a central stalk rotating inside the F(1) region and a stationary peripheral stalk. During catalysis, ATP synthesis in the catalytic domain of F(1) is coupled via a rotary mechanism of the central stalk subunits to proton translocation. In vivo, can only synthesize ATP although its ATP hydrolase activity can be activated artificially in vitro. Part of the complex F(0) domain. This is ATP synthase F(0) complex subunit 8 from Alligator mississippiensis (American alligator).